Here is a 545-residue protein sequence, read N- to C-terminus: Glutamine-dependent NAD(+) synthetase (545 aa).

The CN hydrolase domain occupies 5-247; it reads LRIAMAQFDF…DQWLVVDYMR (243 aa). The active-site Proton acceptor; for glutaminase activity is Glu46. The active-site For glutaminase activity is Lys113. Position 119 (Tyr119) interacts with L-glutamine. Cys151 serves as the catalytic Nucleophile; for glutaminase activity. Positions 177 and 183 each coordinate L-glutamine. The tract at residues 269 to 545 is ligase; that stretch reads VWRAVVRGVQ…RYPISNAYRG (277 aa). 292 to 299 contacts ATP; it reads GLSGGIDS. Position 375 (Asn375) interacts with deamido-NAD(+). Residue Thr399 coordinates ATP. Positions 404 and 516 each coordinate deamido-NAD(+).

The protein in the C-terminal section; belongs to the NAD synthetase family.

The enzyme catalyses deamido-NAD(+) + L-glutamine + ATP + H2O = L-glutamate + AMP + diphosphate + NAD(+) + H(+). It functions in the pathway cofactor biosynthesis; NAD(+) biosynthesis; NAD(+) from deamido-NAD(+) (L-Gln route): step 1/1. Its function is as follows. Catalyzes the ATP-dependent amidation of deamido-NAD to form NAD. Uses L-glutamine as a nitrogen source. The chain is Glutamine-dependent NAD(+) synthetase from Xylella fastidiosa (strain Temecula1 / ATCC 700964).